The sequence spans 917 residues: Outer kinetochore KNL1 complex subunit SPC105 (917 aa).

Residues 1–17 (MNVDERSRIGGREKDAG) are compositionally biased toward basic and acidic residues. A disordered region spans residues 1–38 (MNVDERSRIGGREKDAGPGKGILKQNQSSQMTSSFLEN). Residues 24 to 36 (KQNQSSQMTSSFL) show a composition bias toward polar residues. A Phosphoserine modification is found at serine 77. Disordered stretches follow at residues 93–172 (QNNE…MEMT), 235–282 (TEYE…QPME), and 324–343 (HHID…KRRK). Residues 106–126 (STNSPTKISSQEEPLVTSTQI) show a composition bias toward polar residues. A compositionally biased stretch (basic and acidic residues) spans 127–137 (DDARTEEKTAA). Residues 146–149 (MELT) carry the MELT motif. A Phosphothreonine; by MPS1 modification is found at threonine 149. The segment covering 156–170 (PDSNKASQHDPTSME) has biased composition (polar residues). The segment at 165 to 183 (DPTSMEMTEVFPRSIRQKN) is interacts with the BUB1-BUB3 complex. Short sequence motifs (MELT; degenerate) lie at residues 169-172 (MEMT) and 232-235 (IDLT). Phosphothreonine; by MPS1 is present on residues threonine 172 and threonine 235. Positions 245-257 (NSVSRSTGKSSDY) are enriched in polar residues. Basic and acidic residues-rich tracts occupy residues 258 to 273 (SVER…KSEN) and 324 to 335 (HHIDESPSEKHA). Threonine 356 is modified (phosphothreonine). Serine 380 carries the post-translational modification Phosphoserine. The disordered stretch occupies residues 397–427 (DVFTIEPGTEDTGMQTATDDEEDGENVDDNG). A compositionally biased stretch (acidic residues) spans 414–424 (TDDEEDGENVD). A required for interaction with KRE28 region spans residues 507–638 (PILEVEAFRC…IKEEIRSLKN (132 aa)). The stretch at 591 to 628 (ELILAENLNTLKREYEKLNEEVEKVNSIRGKIRKLNEA) forms a coiled coil.

Component of the KNL1/SPC105 complex composed of SPC105 and KRE28. Part of the outer kinetochore KMN network that includes the KNL1, MIS12 and NDC80 complexes. Interacts (via phosphorylated MELT motifs) with BUB1 and BUB3 in the BUB1-BUB3 complex; the interaction is direct. Interacts with the MIS12 complex subunits MTW1 (via C-terminus) and NSL1 (via C-terminus). Interacts with the NDC80 complex subunits SPC24 and SPC25. Interacts with CNN1 (via N-terminus).

Its subcellular location is the nucleus. The protein resides in the chromosome. It localises to the centromere. It is found in the kinetochore. Acts as a component of the outer kinetochore KNL1 complex that serves as a docking point for spindle assembly checkpoint components and mediates microtubule-kinetochore interactions. Kinetochores, consisting of a centromere-associated inner segment and a microtubule-contacting outer segment, play a crucial role in chromosome segregation by mediating the physical connection between centromeric DNA and spindle microtubules. The outer kinetochore is made up of the ten-subunit KMN network, comprising the MIS12, NDC80 and KNL1 complexes, and auxiliary microtubule-associated components; together they connect the outer kinetochore with the inner kinetochore, bind microtubules, and mediate interactions with mitotic checkpoint proteins that delay anaphase until chromosomes are bioriented on the spindle. Recruits the BUB1-BUB3 complex to kinetochores when phosphorylated by MPS1, to support spindle assembly checkpoint signaling; the effect is reversed by protein phosphatase 1 (PP1). The KNL1 complex is required for kinetochore binding by the kMAPs (kinetochore-bound microtubule-associated proteins) BIM1, BIK1 and SLK19, and motors CIN8 and KAR3. The polypeptide is Outer kinetochore KNL1 complex subunit SPC105 (SPC105) (Saccharomyces cerevisiae (strain ATCC 204508 / S288c) (Baker's yeast)).